Reading from the N-terminus, the 499-residue chain is Alpha-L-arabinofuranosidase B (499 aa).

An N-terminal signal peptide occupies residues 1–17 (MFSRRNLLALGLAATVS). The catalytic stretch occupies residues 18–335 (AGPCDIYEAG…ENIVAAKYVV (318 aa)). Intrachain disulfides connect cysteine 21–cysteine 31, cysteine 81–cysteine 86, and cysteine 176–cysteine 177. Asparagine 83 is a glycosylation site (N-linked (GlcNAc...) asparagine). The N-linked (GlcNAc...) asparagine glycan is linked to asparagine 202. Aspartate 219 lines the substrate pocket. The active-site Nucleophile is glutamate 221. Substrate is bound by residues asparagine 222, asparagine 223, and glycine 296. Aspartate 297 (proton donor) is an active-site residue. Positions 336 to 499 (GSLVSGPSFT…SFEIETAFAS (164 aa)) are ABD. Cysteine 401 and cysteine 439 form a disulfide bridge. 8 residues coordinate substrate: histidine 416, asparagine 418, phenylalanine 419, aspartate 435, histidine 463, glutamate 465, leucine 468, and aspartate 488.

It belongs to the glycosyl hydrolase 54 family.

It localises to the secreted. It catalyses the reaction Hydrolysis of terminal non-reducing alpha-L-arabinofuranoside residues in alpha-L-arabinosides.. It functions in the pathway glycan metabolism; L-arabinan degradation. Alpha-L-arabinofuranosidase involved in the degradation of arabinoxylan, a major component of plant hemicellulose. Able to hydrolyze 1,5-, 1,3- and 1,2-alpha-linkages not only in L-arabinofuranosyl oligosaccharides, but also in polysaccharides containing terminal non-reducing L-arabinofuranoses in side chains, like L-arabinan, arabinogalactan and arabinoxylan. The polypeptide is Alpha-L-arabinofuranosidase B (abfB) (Aspergillus kawachii (strain NBRC 4308) (White koji mold)).